Consider the following 394-residue polypeptide: Probable peptidoglycan glycosyltransferase FtsW (394 aa).

The Cytoplasmic portion of the chain corresponds to 1–27 (MEFLQNIKKNYDEWTRITPQGLLYDRA). Residues 28–48 (LFWLFVILLLIGLVAVTSASI) form a helical membrane-spanning segment. Topologically, residues 49 to 66 (PYSSRLFNDPFYFAKRDA) are periplasmic. The helical transmembrane segment at 67-87 (IYVLLSLLTCYISLQISSSQW) threads the bilayer. Residues 88-93 (EKWHAK) are Cytoplasmic-facing. The chain crosses the membrane as a helical span at residues 94 to 114 (IFLFSVILLLLVPFIGTSVNG). Topologically, residues 115 to 120 (AKRWIS) are periplasmic. The chain crosses the membrane as a helical span at residues 121–141 (LGILNFQPAEFAKLALTCFLA). Residues 142–155 (SYFTRRYDEVRSRH) lie on the Cytoplasmic side of the membrane. The next 2 helical transmembrane spans lie at 156–176 (VSIFKPFIVMLVLGCFLLLQP) and 177–197 (DLGSTVVLFIIMSGMLFIVGA). Residue Lys198 is a topological domain, cytoplasmic. A helical transmembrane segment spans residues 199–219 (ILQFVGLIALGGILFVWLVLT). The Periplasmic segment spans residues 220-277 (ASYRLKRFIGFLEPFKEPYGTGFQLTNSLIAFGRGEITGEGLGNSIQKLDYLPEAHTD). The helical transmembrane segment at 278–298 (FIMAIIGEEFGFIGILIVILL) threads the bilayer. Residues 299-322 (LGLLIFRAMKIGRESLMLEQRFRG) lie on the Cytoplasmic side of the membrane. Residues 323–343 (FFALGIGFWIFFQGFVNLGMA) form a helical membrane-spanning segment. The Periplasmic segment spans residues 344–353 (LGMLPTKGLT). A helical transmembrane segment spans residues 354-374 (FPLVSYGGSSIIIMSATIGIL). The Cytoplasmic portion of the chain corresponds to 375–394 (LRIDHENRLFRIGQARLRDD).

Belongs to the SEDS family. FtsW subfamily.

The protein localises to the cell inner membrane. It catalyses the reaction [GlcNAc-(1-&gt;4)-Mur2Ac(oyl-L-Ala-gamma-D-Glu-L-Lys-D-Ala-D-Ala)](n)-di-trans,octa-cis-undecaprenyl diphosphate + beta-D-GlcNAc-(1-&gt;4)-Mur2Ac(oyl-L-Ala-gamma-D-Glu-L-Lys-D-Ala-D-Ala)-di-trans,octa-cis-undecaprenyl diphosphate = [GlcNAc-(1-&gt;4)-Mur2Ac(oyl-L-Ala-gamma-D-Glu-L-Lys-D-Ala-D-Ala)](n+1)-di-trans,octa-cis-undecaprenyl diphosphate + di-trans,octa-cis-undecaprenyl diphosphate + H(+). It participates in cell wall biogenesis; peptidoglycan biosynthesis. Functionally, peptidoglycan polymerase that is essential for cell division. This chain is Probable peptidoglycan glycosyltransferase FtsW, found in Haemophilus influenzae (strain ATCC 51907 / DSM 11121 / KW20 / Rd).